A 1129-amino-acid polypeptide reads, in one-letter code: ATP-dependent DNA helicase mph1 (1129 aa).

Disordered stretches follow at residues 1 to 101 (MTGS…FEDA), 124 to 222 (TQLT…QNEG), and 236 to 306 (DAFD…TQHK). The segment covering 45–63 (DGTASDVRRRPSENRESQR) has biased composition (basic and acidic residues). Composition is skewed to polar residues over residues 203-222 (NTKAPTHQPITRSPTVQNEG) and 242-285 (ISLS…QTDQ). Residues 297–306 (QKDEPPTQHK) show a composition bias toward basic and acidic residues. The Helicase ATP-binding domain maps to 331-499 (IAQKGLFHNL…AVIDGLDIAR (169 aa)). An ATP-binding site is contributed by 344–351 (LPTGLGKT). The DEAH box signature appears at 447 to 450 (DEAH). Residues 674–843 (VLNHFMDAGE…GSRFTFHDDI (170 aa)) form the Helicase C-terminal domain. Disordered regions lie at residues 863 to 930 (IPDE…VEIP), 1018 to 1060 (RQGD…STED), and 1072 to 1129 (SVVK…DSDD). Basic residues-rich tracts occupy residues 877–889 (RRGRAPKRPPKKF) and 1028–1044 (SPRHERRRRLSKTKPRY). Over residues 1077–1086 (QKQQPFYSSQ) the composition is skewed to polar residues.

Belongs to the DEAD box helicase family. DEAH subfamily. FANCM sub-subfamily. In terms of assembly, interacts with the MHF histone-fold complex to form the FANCM-MHF complex.

The protein localises to the nucleus. It carries out the reaction ATP + H2O = ADP + phosphate + H(+). Functionally, ATP-dependent DNA helicase involved in DNA damage repair by homologous recombination and in genome maintenance. Capable of unwinding D-loops. Plays a role in limiting crossover recombinants during mitotic DNA double-strand break (DSB) repair. Component of a FANCM-MHF complex which promotes gene conversion at blocked replication forks, probably by reversal of the stalled fork. This chain is ATP-dependent DNA helicase mph1, found in Aspergillus oryzae (strain ATCC 42149 / RIB 40) (Yellow koji mold).